The sequence spans 211 residues: Riboflavin kinase (211 aa).

The segment at 1 to 81 is H-T-H motif-like; sequence MKCIDRRLIG…DLLRYFNILS (81 aa). A riboflavin kinase region spans residues 82–211; the sequence is IRLSGRVVSG…DRVEIEIYLE (130 aa). 91-96 contacts CDP; it reads GLGEGA. Threonine 120 and asparagine 122 together coordinate Mg(2+). Residues threonine 177 and glutamate 185 each coordinate FMN. Position 190–193 (190–193) interacts with CDP; that stretch reads FKLR.

The protein belongs to the archaeal riboflavin kinase family. It depends on Mg(2+) as a cofactor.

It catalyses the reaction riboflavin + CTP = CDP + FMN + H(+). Its pathway is cofactor biosynthesis; FMN biosynthesis; FMN from riboflavin (CTP route): step 1/1. Functionally, catalyzes the CTP-dependent phosphorylation of riboflavin (vitamin B2) to form flavin mononucleotide (FMN). This chain is Riboflavin kinase (ribK), found in Pyrobaculum islandicum (strain DSM 4184 / JCM 9189 / GEO3).